We begin with the raw amino-acid sequence, 196 residues long: MSYYAFEGLIPVVHPTAFVHPSAVLIGDVIVGAGVYIGPLASLRGDYGRLIVQAGANIQDGCIMHGYTDTDTIVGENGHIGHGAILHGCVIGRDALVGMNSVIMDGAVIGEESIVAAMSFVKAGFHGEKRQLLMGTPARAVRSVSDDELHWKRLNTKEYQDLVGRCHASLHETQPLRQMEENRPRLQGTTDVTPKR.

The disordered stretch occupies residues 173-196 (TQPLRQMEENRPRLQGTTDVTPKR). The span at 187–196 (QGTTDVTPKR) shows a compositional bias: polar residues.

It belongs to the transferase hexapeptide repeat family.

It participates in amine and polyamine metabolism; carnitine metabolism. In terms of biological role, overproduction of CaiE stimulates the activity of CaiB and CaiD. The sequence is that of Carnitine operon protein CaiE from Escherichia coli O157:H7.